We begin with the raw amino-acid sequence, 244 residues long: Glutathione S-transferase theta-2 (244 aa).

One can recognise a GST N-terminal domain in the interval Gly2–Asp82. Residues His40–Lys41, Lys53–Leu54, Glu66–Ser67, and Asp104–Arg107 each bind glutathione. In terms of domain architecture, GST C-terminal spans Asp88 to Thr224.

This sequence belongs to the GST superfamily. Theta family. As to quaternary structure, homodimer. As to expression, expressed at low levels in liver. In lung, expressed at low levels in ciliated bronchiolar cells, alveolar macrophages and alveolar type II cells.

It localises to the cytoplasm. Its subcellular location is the cytosol. It is found in the nucleus. The enzyme catalyses RX + glutathione = an S-substituted glutathione + a halide anion + H(+). In terms of biological role, conjugation of reduced glutathione to a wide number of exogenous and endogenous hydrophobic electrophiles. Has a sulfatase activity. The polypeptide is Glutathione S-transferase theta-2 (GSTT2) (Homo sapiens (Human)).